A 126-amino-acid chain; its full sequence is Fluoride-specific ion channel FluC (126 aa).

4 helical membrane-spanning segments follow: residues 4–24 (YLYIAAGGAAGSLCRYLVSGV), 35–55 (IGTFSVNMIGCLFFGLVTGLF), 67–87 (LLILTGFMGAFTTFSTYMFES), and 100–120 (ALNIGGQSILGFACIVGGLAL). Na(+) contacts are provided by G75 and T78.

Belongs to the fluoride channel Fluc/FEX (TC 1.A.43) family.

The protein localises to the cell inner membrane. The catalysed reaction is fluoride(in) = fluoride(out). With respect to regulation, na(+) is not transported, but it plays an essential structural role and its presence is essential for fluoride channel function. Fluoride-specific ion channel. Important for reducing fluoride concentration in the cell, thus reducing its toxicity. This Maridesulfovibrio salexigens (strain ATCC 14822 / DSM 2638 / NCIMB 8403 / VKM B-1763) (Desulfovibrio salexigens) protein is Fluoride-specific ion channel FluC.